Reading from the N-terminus, the 209-residue chain is Response regulator protein VraR (209 aa).

The region spanning 4 to 120 is the Response regulatory domain; sequence KVLFVDDHEM…DIADAVRKTS (117 aa). Asp-55 bears the 4-aspartylphosphate mark. In terms of domain architecture, HTH luxR-type spans 141–206; the sequence is RAELYEMLTE…QAVIYAFQHN (66 aa). Residues 165–184 constitute a DNA-binding region (H-T-H motif); sequence NQEIASASHITIKTVKTHVS.

In terms of assembly, homodimer. Post-translationally, phosphorylated by VraS. Phosphorylation state of VraR controls dimerization of the protein.

Its function is as follows. Member of the two-component regulatory system VraS/VraR involved in the control of the cell wall peptidoglycan biosynthesis. Upon cellular stress, the histidine kinase VraS transfers the phosphoryl group onto VraR. Upon phosphorylation, VraR dimerizes at the N-terminal domain. In turn, phosphorylation-induced dimerization expand and enhance the VraR binding to its own promoter leading to increased expression and subsequent modulation of as many as 40 genes, which ultimately constitute the S.aureus response to cell wall damage. In addition, inhibits the host autophagic flux and delays the early stage of autophagosome formation, thereby promoting bacterial survival. Facilitates the ability of S.aureus to resist host polymorphonuclear leukocytes-mediated phagocytosis and killing thus contributing to immune evasion. The sequence is that of Response regulator protein VraR (vraR) from Staphylococcus aureus (strain NCTC 8325 / PS 47).